The sequence spans 101 residues: Small ribosomal subunit protein uS14 (101 aa).

Belongs to the universal ribosomal protein uS14 family. In terms of assembly, part of the 30S ribosomal subunit. Contacts proteins S3 and S10.

Binds 16S rRNA, required for the assembly of 30S particles and may also be responsible for determining the conformation of the 16S rRNA at the A site. The protein is Small ribosomal subunit protein uS14 of Pseudomonas putida (strain GB-1).